Reading from the N-terminus, the 653-residue chain is Endoglin (653 aa).

Positions 1–24 are cleaved as a signal peptide; sequence MDRGVLPQAIALLLAVCSFGPTAG. Residues 25–581 lie on the Extracellular side of the membrane; that stretch reads LAEGVQCDLQ…IVSPGLPDKG (557 aa). Positions 27–44 are OR1, N-terminal part; it reads EGVQCDLQPVDPKVTYTT. The required for interaction with GDF2 stretch occupies residues 27–336; that stretch reads EGVQCDLQPV…RSCGSGLQPS (310 aa). 7 cysteine pairs are disulfide-bonded: Cys31–Cys206, Cys51–Cys181, Cys241–Cys329, Cys349–Cys381, Cys362–Cys442, Cys393–Cys411, and Cys493–Cys549. The OR2 stretch occupies residues 45 to 198; sequence SQVSEGCVAH…MGHTLEWKSH (154 aa). N-linked (GlcNAc...) asparagine glycosylation is present at Asn57. The segment at 199-329 is OR1, C-terminal part; the sequence is TQASVLGCHL…SVISLQDRSC (131 aa). An essential for interaction with GDF2 region spans residues 269–281; that stretch reads KAWTTGEYSFKIF. Asn306 carries N-linked (GlcNAc...) asparagine glycosylation. The region spanning 362–512 is the ZP domain; that stretch reads CSDDVMTLVL…MVDLIQNQEA (151 aa). A helical transmembrane segment spans residues 582-606; sequence LVLPAVLGITFGAFLIGALLTAALW. The Cytoplasmic segment spans residues 607–653; it reads YIHSHTRHPGKREPVVAVAAPASSESSSTNHSIGSTQSTPCSTSSMA. The segment covering 625-634 has biased composition (low complexity); it reads AAPASSESSS. The interval 625-653 is disordered; that stretch reads AAPASSESSSTNHSIGSTQSTPCSTSSMA. The segment covering 635–653 has biased composition (polar residues); sequence TNHSIGSTQSTPCSTSSMA. Phosphoserine; by TGFBR1 occurs at positions 641 and 644.

In terms of assembly, homodimer; disulfide-linked. Forms a heteromeric complex with the signaling receptors for transforming growth factor-beta: TGFBR1 and/or TGFBR2. It is able to bind TGFB1 and TGFB2 with high affinity, but not TGFB3. Interacts with GDF2, forming a heterotetramer with a 2:2 stoichiometry. Interacts with ACVRL1. Can form a heteromeric complex with GDF2 and ACVRL1. Interacts with BMP10. Interacts with DYNLT4. Interacts with ARRB2.

It localises to the cell membrane. Its function is as follows. Vascular endothelium glycoprotein that plays an important role in the regulation of angiogenesis. Required for normal structure and integrity of adult vasculature. Regulates the migration of vascular endothelial cells. Required for normal extraembryonic angiogenesis and for embryonic heart development. May regulate endothelial cell shape changes in response to blood flow, which drive vascular remodeling and establishment of normal vascular morphology during angiogenesis. May play a role in the binding of endothelial cells to integrins. Acts as a TGF-beta coreceptor and is involved in the TGF-beta/BMP signaling cascade that ultimately leads to the activation of SMAD transcription factors. Required for GDF2/BMP9 signaling through SMAD1 in endothelial cells and modulates TGFB1 signaling through SMAD3. The sequence is that of Endoglin (ENG) from Sus scrofa (Pig).